The primary structure comprises 310 residues: Olfactory receptor 5T7 (310 aa).

Over 1 to 23 (MENITEVTEFILMGFTDNADLEI) the chain is Extracellular. Asparagine 3 carries an N-linked (GlcNAc...) asparagine glycan. A helical membrane pass occupies residues 24–44 (LSFFLFLAIYLFTLMGNLGLI). The Cytoplasmic segment spans residues 45–52 (TLVIGDSR). A helical transmembrane segment spans residues 53–73 (LHNPMYYFLSVLSSVDACYST). Topologically, residues 74–97 (VITPQMVVDFVSEKKVISFIGCAT) are extracellular. Cysteine 95 and cysteine 187 are disulfide-bonded. A helical transmembrane segment spans residues 98–118 (QMFLAVTFGTTECFLLAAMAY). Topologically, residues 119–131 (DRYVAIHNPLMYV) are cytoplasmic. A helical transmembrane segment spans residues 132 to 152 (VSMSPRVYVPLIIASYAGGIL). Topologically, residues 153 to 194 (HAVIHTVATFRLSFCGSNKISHIFCDIPPLLAISCSDTHFNQ) are extracellular. The chain crosses the membrane as a helical span at residues 195–215 (LLLFYCAGFIEVVTILIVLLS). Residues 216–235 (YGFILSVILKTRSTEGKRKV) lie on the Cytoplasmic side of the membrane. A helical transmembrane segment spans residues 236-256 (FSTCGSHLMAVSTFHGTVLFM). The Extracellular portion of the chain corresponds to 257–269 (YVRPSDSYALEHD). The chain crosses the membrane as a helical span at residues 270–290 (MMVSIFYSIVIPMLNPLIYSL). Residues 291-310 (RNKDVKEAIKKVFGKRILCG) are Cytoplasmic-facing.

The protein belongs to the G-protein coupled receptor 1 family.

Its subcellular location is the cell membrane. Its function is as follows. Potential odorant receptor. This chain is Olfactory receptor 5T7, found in Mus musculus (Mouse).